A 607-amino-acid polypeptide reads, in one-letter code: MKNSYKWDLSVLLNNQSLQANFLKIQTVSEALIKAYNNGLCFTNKTSFEQFLAIDDKFTELENRYTNYLYNKQNENNLDKEVNDAIFAYQSFKNNHNLAFSTLQQELYNHEKLIKDYLTDPKLAVYKRNLMLVFRDKPHQLSSQTQSLLSQINPCFNQAERIFNILSTADLNLQPVVYQNKKYPINSVSDYQSLLENTNRGIRKACYEKWIEIYWTNRNSLSLSLVENYIQLENFAKLKNHPSYIAQTAFNDEIEVGFIDFVYQQVAQFAKTFQAFIRLKKQIYKHVLKVNKVEPYDLTLTLFKTKKSYTIEQAKQDALKVLDLLGDNYIKIVKKAFNENWIDWLADKNKYTGAYSISNVKGLEHFFILMNFDKTKSSLNTLVHELGHSVHSWYASQHQSQNIDPTIFYAEIASIANELLLCYYELQLYKNNHKQLIASLLSQINHFFGATTRQIMFSQFEKDTLYLIRVNQKPDFKTLIKIYANTAVKYQGFKPEVVANKLKKTQYQKSLSHIIAIPHFYAGNFYVYKYAIGQVAGILVAKKINSGDKKMKDNYFKFLSSGSSLAPLETIKLLGIDLTSPQPWQEAHNEVKRWLKIVKQSFKKLQK.

Position 384 (His384) interacts with Zn(2+). Residue Glu385 is part of the active site. Residues His388 and His391 each coordinate Zn(2+).

Belongs to the peptidase M3B family. It depends on Zn(2+) as a cofactor.

This Mycoplasma genitalium (strain ATCC 33530 / DSM 19775 / NCTC 10195 / G37) (Mycoplasmoides genitalium) protein is Oligoendopeptidase F homolog (pepF).